Reading from the N-terminus, the 469-residue chain is Glutamine synthetase (469 aa).

Residues 13 to 97 (HEVKFVDLRF…IRCDILEPGT (85 aa)) enclose the GS beta-grasp domain. The GS catalytic domain occupies 105–469 (PRSIAKRAED…PVEFELYYSV (365 aa)). Mg(2+) contacts are provided by Glu130 and Glu132. Glu208 provides a ligand contact to ATP. Mg(2+)-binding residues include Glu213 and Glu221. L-glutamate is bound by residues 265–266 (NG) and Gly266. Residue His270 participates in Mg(2+) binding. ATP is bound by residues 272-274 (HMS) and Ser274. L-glutamate-binding residues include Arg322, Glu328, and Arg340. ATP-binding residues include Arg340, Arg345, and Lys353. Glu358 contributes to the Mg(2+) binding site. L-glutamate is bound at residue Arg360. An O-AMP-tyrosine modification is found at Tyr398.

The protein belongs to the glutamine synthetase family. Oligomer of 12 subunits arranged in the form of two hexameric ring. Requires Mg(2+) as cofactor.

It is found in the cytoplasm. The enzyme catalyses L-glutamate + NH4(+) + ATP = L-glutamine + ADP + phosphate + H(+). Its activity is regulated as follows. The activity of this enzyme could be controlled by adenylation under conditions of abundant glutamine. Functionally, catalyzes the ATP-dependent biosynthesis of glutamine from glutamate and ammonia. The protein is Glutamine synthetase of Escherichia coli O157:H7.